We begin with the raw amino-acid sequence, 273 residues long: Transmembrane epididymal protein 1 (273 aa).

Transmembrane regions (helical) follow at residues 34–54 (IVTGSLLTFYVVLCLDGGMVL), 72–92 (LTMFILLTLNGCVDFMSKNVL), 96–116 (CVGLEKGTLVLIIYELLLLMV), 129–149 (VYSLLILVVFLLLLVLTAELW), 158–178 (LMETFLILMMGSWLMQAGFIL), and 195–215 (IMFVTTFFCWHVMINASFLLG).

It belongs to the TMEM45 family.

It is found in the membrane. This chain is Transmembrane epididymal protein 1 (TEDDM1), found in Homo sapiens (Human).